A 533-amino-acid chain; its full sequence is DNA-directed RNA polymerase III subunit RPC3 (533 aa).

Serine 194 carries the phosphoserine modification. The tract at residues 197 to 230 (GKGKRRRSSDEDATGEPKAKRPKQTTDNKEPIPD) is disordered. Positions 211 to 228 (GEPKAKRPKQTTDNKEPI) are enriched in basic and acidic residues.

This sequence belongs to the eukaryotic RPC3/POLR3C RNA polymerase subunit family. In terms of assembly, component of the RNA polymerase III complex consisting of 17 subunits: a ten-subunit horseshoe-shaped catalytic core composed of POLR3A/RPC1, POLR3B/RPC2, POLR1C/RPAC1, POLR1D/RPAC2, POLR3K/RPC10, POLR2E/RPABC1, POLR2F/RPABC2, POLR2H/RPABC3, POLR2K/RPABC4 and POLR2L/RPABC5; a mobile stalk composed of two subunits POLR3H/RPC8 and CRCP/RPC9, protruding from the core and functioning primarily in transcription initiation; and additional subunits homologous to general transcription factors of the RNA polymerase II machinery, POLR3C/RPC3-POLR3F/RPC6-POLR3G/RPC7 heterotrimer required for transcription initiation and POLR3D/RPC4-POLR3E/RPC5 heterodimer involved in both transcription initiation and termination. Directly interacts with POLR3G/RPC7 and POLR3GL. Directly interacts with POLR3F/RPC6. Interacts with GTF3C4. As part of the RNA polymerase III complex, interacts with PKP2.

It localises to the nucleus. In terms of biological role, DNA-dependent RNA polymerase catalyzes the transcription of DNA into RNA using the four ribonucleoside triphosphates as substrates. Specific peripheric component of RNA polymerase III (Pol III) which synthesizes small non-coding RNAs including 5S rRNA, snRNAs, tRNAs and miRNAs from at least 500 distinct genomic loci. Part of POLR3C/RPC3-POLR3F/RPC6-POLR3G/RPC7 heterotrimer, coordinates the dynamics of Pol III stalk and clamp modules during the transition from apo to elongation state. Pol III plays a key role in sensing and limiting infection by intracellular bacteria and DNA viruses. Acts as a nuclear and cytosolic DNA sensor involved in innate immune response. Can sense non-self dsDNA that serves as template for transcription into dsRNA. The non-self RNA polymerase III transcripts, such as Epstein-Barr virus-encoded RNAs (EBERs) induce type I interferon and NF-kappa-B through the RIG-I pathway. Preferentially binds single-stranded DNA (ssDNA) in a sequence-independent manner. In Bos taurus (Bovine), this protein is DNA-directed RNA polymerase III subunit RPC3 (POLR3C).